The chain runs to 529 residues: Zinc finger CCCH domain-containing protein 65 (529 aa).

Residues 1–10 show a composition bias toward basic and acidic residues; it reads MADADARAPP. 2 disordered regions span residues 1–36 and 134–179; these read MADADARAPPKSDPGATPIGSISPSSAAPAAGEDEV and PARK…GSYV. The span at 14–31 shows a compositional bias: low complexity; that stretch reads PGATPIGSISPSSAAPAA. 3 C3H1-type zinc fingers span residues 108–136, 237–265, and 285–313; these read RPGEPDCTYYVKFGSCRFGMKCKFNHPAR, GSSQEECKYYSTPGGCKFGKACKYLHRDG, and RPGEKECPYYMRTGSCKYATNCKFHHPDP. The interval 313–347 is disordered; that stretch reads PSNVASKDPQLEHENGDAPQQDVQGSSSQPNASIW. Over residues 333-344 the composition is skewed to polar residues; it reads QDVQGSSSQPNA. C3H1-type zinc fingers lie at residues 433–461 and 477–505; these read RPGQPECQHFVKSGFCKFRMKCKYHHPRS and KPDQPVCTYYGRYGVCKFGPACAYNHPFN.

The chain is Zinc finger CCCH domain-containing protein 65 from Oryza sativa subsp. japonica (Rice).